We begin with the raw amino-acid sequence, 447 residues long: Argininosuccinate synthase (447 aa).

Residues 17–25 (AFSGGLDTS) and alanine 43 each bind ATP. Tyrosine 99 contributes to the L-citrulline binding site. ATP-binding residues include glycine 129 and threonine 131. Threonine 131, asparagine 135, and aspartate 136 together coordinate L-aspartate. Asparagine 135 provides a ligand contact to L-citrulline. Aspartate 136 lines the ATP pocket. L-citrulline-binding residues include arginine 139 and serine 192. Residue aspartate 194 participates in ATP binding. L-citrulline-binding residues include threonine 201, glutamate 203, and glutamate 280.

This sequence belongs to the argininosuccinate synthase family. Type 2 subfamily. Homotetramer.

It localises to the cytoplasm. It carries out the reaction L-citrulline + L-aspartate + ATP = 2-(N(omega)-L-arginino)succinate + AMP + diphosphate + H(+). It functions in the pathway amino-acid biosynthesis; L-arginine biosynthesis; L-arginine from L-ornithine and carbamoyl phosphate: step 2/3. The chain is Argininosuccinate synthase from Salmonella agona (strain SL483).